The following is a 341-amino-acid chain: L-threonine 3-dehydrogenase (341 aa).

Cysteine 38 serves as a coordination point for Zn(2+). Active-site charge relay system residues include threonine 40 and histidine 43. Positions 63, 64, 93, 96, 99, and 107 each coordinate Zn(2+). NAD(+)-binding positions include isoleucine 175, aspartate 195, arginine 200, 262-264 (LGI), and 286-287 (IY).

The protein belongs to the zinc-containing alcohol dehydrogenase family. In terms of assembly, homotetramer. Zn(2+) is required as a cofactor.

Its subcellular location is the cytoplasm. The enzyme catalyses L-threonine + NAD(+) = (2S)-2-amino-3-oxobutanoate + NADH + H(+). Its pathway is amino-acid degradation; L-threonine degradation via oxydo-reductase pathway; glycine from L-threonine: step 1/2. Its function is as follows. Catalyzes the NAD(+)-dependent oxidation of L-threonine to 2-amino-3-ketobutyrate. The sequence is that of L-threonine 3-dehydrogenase from Yersinia enterocolitica serotype O:8 / biotype 1B (strain NCTC 13174 / 8081).